The primary structure comprises 738 residues: Catalase-peroxidase 2 (738 aa).

An N-terminal signal peptide occupies residues 1–26 (MKRTLPTLSALALSMSLALAAGQTQA). The segment at residues 104-226 (WHSAGVYRIF…LGATQMGLIY (123 aa)) is a cross-link (tryptophyl-tyrosyl-methioninium (Trp-Tyr) (with M-252)). H105 serves as the catalytic Proton acceptor. Positions 226–252 (YVNPEGPNGVPDPLAAARDIRETFGRM) form a cross-link, tryptophyl-tyrosyl-methioninium (Tyr-Met) (with W-104). H267 lines the heme b pocket.

Belongs to the peroxidase family. Peroxidase/catalase subfamily. As to quaternary structure, homodimer or homotetramer. The cofactor is heme b. In terms of processing, formation of the three residue Trp-Tyr-Met cross-link is important for the catalase, but not the peroxidase activity of the enzyme.

It catalyses the reaction H2O2 + AH2 = A + 2 H2O. The catalysed reaction is 2 H2O2 = O2 + 2 H2O. In terms of biological role, bifunctional enzyme with both catalase and broad-spectrum peroxidase activity. The sequence is that of Catalase-peroxidase 2 from Shewanella amazonensis (strain ATCC BAA-1098 / SB2B).